The following is a 284-amino-acid chain: uncharacterized protein (284 aa).

The chain crosses the membrane as a helical span at residues 9–28 (IILRWVVTLYIYGFILYQIT).

It is found in the membrane. This is an uncharacterized protein from Aquifex aeolicus (strain VF5).